Reading from the N-terminus, the 276-residue chain is Large ribosomal subunit protein uL2c (276 aa).

The interval 225-256 (NPVDHPHGGGEGRSPIGRPKPVSPWGKTALGA) is disordered.

Belongs to the universal ribosomal protein uL2 family. In terms of assembly, part of the 50S ribosomal subunit.

It localises to the plastid. Its subcellular location is the chloroplast. The polypeptide is Large ribosomal subunit protein uL2c (rpl2) (Mesostigma viride (Green alga)).